We begin with the raw amino-acid sequence, 248 residues long: MAGHSQFKNIMHRKGRQDAVRSKMFSKLAREITVAAKQGLPDPAMNPRLRLAIQNAKAQSMPKDNIERAIKKAAGNDGENYDEVRYEGRGPGGVSVIVEALTDNRNRTASNVRAAFTKSGGSLGETGSVSFMFDRVGEIVYKPEAGDADKVMEAAIEAGAEDVQSGEDGHVILCAFEDIGEVSKALEAALGEAESIKTIWKPQTNTELDEEKARSVLKLLSVLEDDDDVQNVYTNFEVSDEVMEKLSA.

Belongs to the TACO1 family.

It is found in the cytoplasm. This is Probable transcriptional regulatory protein BOV_1660 from Brucella ovis (strain ATCC 25840 / 63/290 / NCTC 10512).